The sequence spans 1146 residues: uncharacterized protein (1146 aa).

This is an uncharacterized protein from Saccharum officinarum (Sugarcane).